An 89-amino-acid polypeptide reads, in one-letter code: Large ribosomal subunit protein bL31B (89 aa).

Belongs to the bacterial ribosomal protein bL31 family. Type B subfamily. In terms of assembly, part of the 50S ribosomal subunit.

The sequence is that of Large ribosomal subunit protein bL31B from Enterococcus faecalis (strain ATCC 700802 / V583).